The sequence spans 393 residues: Nucleosome assembly protein 1-like 1-B (393 aa).

Residues methionine 1 to threonine 10 are compositionally biased toward basic and acidic residues. The segment at methionine 1 to glutamine 38 is disordered. Positions glutamate 11–glutamate 30 are enriched in acidic residues. The NAP1L motif motif lies at tyrosine 126–alanine 151. The short motif at isoleucine 274–histidine 280 is the Nuclear localization signal element. The segment covering alanine 347 to proline 377 has biased composition (acidic residues). Positions alanine 347–glutamine 393 are disordered.

The protein belongs to the nucleosome assembly protein (NAP) family. As to quaternary structure, forms homomultimers. Interacts with histone b4. Interacts with the B-type cyclins ccnb1 and ccnb2. Post-translationally, phosphorylated by cyclin B-cdc2 kinase complexes.

Its subcellular location is the cytoplasm. It localises to the nucleus. Functionally, acts as a chaperone for the linker histone to facilitate deposition of histone B4 onto linker DNA. Required for both remodeling of sperm chromatin into nucleosomes, and linker histone binding to nucleosome core dimers. Plays a role in tissue-specific gene regulation. Required for primitive hemopoiesis, acting upstream of tal1/scl. The sequence is that of Nucleosome assembly protein 1-like 1-B (nap1l1-b) from Xenopus laevis (African clawed frog).